The following is a 321-amino-acid chain: tRNA-dihydrouridine synthase B (321 aa).

Residues 16 to 18 (PMA) and Gln70 each bind FMN. Residue Cys100 is the Proton donor of the active site. FMN is bound by residues Lys139, 200-202 (NGD), and 224-225 (GR).

It belongs to the Dus family. DusB subfamily. Requires FMN as cofactor.

The enzyme catalyses a 5,6-dihydrouridine in tRNA + NAD(+) = a uridine in tRNA + NADH + H(+). It catalyses the reaction a 5,6-dihydrouridine in tRNA + NADP(+) = a uridine in tRNA + NADPH + H(+). Its function is as follows. Catalyzes the synthesis of 5,6-dihydrouridine (D), a modified base found in the D-loop of most tRNAs, via the reduction of the C5-C6 double bond in target uridines. The protein is tRNA-dihydrouridine synthase B of Shigella flexneri.